The sequence spans 428 residues: 3-phosphoshikimate 1-carboxyvinyltransferase (428 aa).

3 residues coordinate 3-phosphoshikimate: K21, S22, and R26. Residue K21 participates in phosphoenolpyruvate binding. G91 and R119 together coordinate phosphoenolpyruvate. 4 residues coordinate 3-phosphoshikimate: S164, Q166, D313, and K340. Phosphoenolpyruvate is bound at residue Q166. The active-site Proton acceptor is the D313. 2 residues coordinate phosphoenolpyruvate: R344 and R386.

It belongs to the EPSP synthase family. Monomer.

It is found in the cytoplasm. The catalysed reaction is 3-phosphoshikimate + phosphoenolpyruvate = 5-O-(1-carboxyvinyl)-3-phosphoshikimate + phosphate. The protein operates within metabolic intermediate biosynthesis; chorismate biosynthesis; chorismate from D-erythrose 4-phosphate and phosphoenolpyruvate: step 6/7. Catalyzes the transfer of the enolpyruvyl moiety of phosphoenolpyruvate (PEP) to the 5-hydroxyl of shikimate-3-phosphate (S3P) to produce enolpyruvyl shikimate-3-phosphate and inorganic phosphate. The polypeptide is 3-phosphoshikimate 1-carboxyvinyltransferase (Campylobacter jejuni subsp. jejuni serotype O:6 (strain 81116 / NCTC 11828)).